We begin with the raw amino-acid sequence, 638 residues long: Cytoplasmic dynein 1 intermediate chain 2 (638 aa).

Composition is skewed to basic and acidic residues over residues 1–13 (MSDKSELKAELER) and 20–43 (QIREEKKRKEEERKKKETDQKKEA). Disordered regions lie at residues 1–135 (MSDK…GRGP) and 155–214 (TYTK…EEKQ). An N-acetylserine modification is found at Ser2. Residue Ser51 is modified to Diphosphoserine. Ser51, Ser73, Trp81, Pro84, and Ser90 each carry phosphoserine. A compositionally biased stretch (low complexity) spans 88-97 (PSSKSVSTPS). Thr95 is modified (phosphothreonine). 3 positions are modified to phosphoserine: Ser97, Ser101, and Ser104. Basic and acidic residues predominate over residues 190–214 (EKTLKKDEENDSKAPPHELTEEEKQ). WD repeat units lie at residues 277–326 (SKHR…TTPE), 330–370 (HCQS…RTPV), 379–420 (AHTH…HPQD), 429–469 (SKAV…AGIS), 474–519 (GHQG…PLYS), 522–562 (DNAD…EVPT), and 568–607 (EGNPALNRVRWTHSGREIAVGDSEGQIVIYDVGEQIAVPR).

It belongs to the dynein intermediate chain family. In terms of assembly, homodimer. The cytoplasmic dynein 1 complex consists of two catalytic heavy chains (HCs) and a number of non-catalytic subunits presented by intermediate chains (ICs), light intermediate chains (LICs) and light chains (LCs); the composition seems to vary in respect to the IC, LIC and LC composition. The heavy chain homodimer serves as a scaffold for the probable homodimeric assembly of the respective non-catalytic subunits. The ICs and LICs bind directly to the HC dimer and the LCs assemble on the IC dimer. Interacts with DYNLT3. Interacts with DYNLT1. Interacts (dephosphorylated at Ser-90) with DCTN1. Interacts with BICD2. Interacts with SPEF2. Interacts with CFAP61. As to quaternary structure, (Microbial infection) Interacts with human adenovirus 5 hexon protein; this interaction probably allows virus intracellular transport. In terms of processing, the phosphorylation status of Ser-90 appears to be involved in dynactin-dependent target binding. Post-translationally, pyrophosphorylation by 5-diphosphoinositol pentakisphosphate (5-IP7) promotes interaction with DCTN1. Serine pyrophosphorylation is achieved by Mg(2+)-dependent, but enzyme independent transfer of a beta-phosphate from a inositol pyrophosphate to a pre-phosphorylated serine residue.

Its subcellular location is the cytoplasm. The protein resides in the cytoskeleton. Acts as one of several non-catalytic accessory components of the cytoplasmic dynein 1 complex that are thought to be involved in linking dynein to cargos and to adapter proteins that regulate dynein function. Cytoplasmic dynein 1 acts as a motor for the intracellular retrograde motility of vesicles and organelles along microtubules. The intermediate chains mediate the binding of dynein to dynactin via its 150 kDa component (p150-glued) DCTN1. Involved in membrane-transport, such as Golgi apparatus, late endosomes and lysosomes. The sequence is that of Cytoplasmic dynein 1 intermediate chain 2 from Homo sapiens (Human).